A 200-amino-acid polypeptide reads, in one-letter code: Cytochrome c biogenesis ATP-binding export protein CcmA (200 aa).

Residues 1–200 (MRLSGRGLRC…TREMRIGAAA (200 aa)) enclose the ABC transporter domain. Residue 35 to 42 (GRNGAGKT) participates in ATP binding.

The protein belongs to the ABC transporter superfamily. CcmA exporter (TC 3.A.1.107) family. The complex is composed of two ATP-binding proteins (CcmA) and two transmembrane proteins (CcmB).

Its subcellular location is the cell inner membrane. The catalysed reaction is heme b(in) + ATP + H2O = heme b(out) + ADP + phosphate + H(+). Part of the ABC transporter complex CcmAB involved in the biogenesis of c-type cytochromes; once thought to export heme, this seems not to be the case, but its exact role is uncertain. Responsible for energy coupling to the transport system. The sequence is that of Cytochrome c biogenesis ATP-binding export protein CcmA from Rhodopseudomonas palustris (strain HaA2).